Here is a 118-residue protein sequence, read N- to C-terminus: MARVKRGVVARARHKKILKQAKGYYGARSRVYRVAFQAVIKAGQYAYRDRRQKKRQFRQLWIARINAAARQNGISYSRFINGLKKASIEIDRKILADIAVFDKVAFAALADKAKGDLV.

Belongs to the bacterial ribosomal protein bL20 family.

In terms of biological role, binds directly to 23S ribosomal RNA and is necessary for the in vitro assembly process of the 50S ribosomal subunit. It is not involved in the protein synthesizing functions of that subunit. This chain is Large ribosomal subunit protein bL20, found in Sodalis glossinidius (strain morsitans).